Reading from the N-terminus, the 114-residue chain is Lymphotactin (114 aa).

The signal sequence occupies residues 1 to 21 (MRLLLLTFLGVCCLTPWVVEG). A disulfide bridge links cysteine 32 with cysteine 69. Residues 92–114 (KNMAETVPTGAQRSTSTAITLTG) form a disordered region. Residues 100-114 (TGAQRSTSTAITLTG) show a composition bias toward polar residues.

The protein belongs to the intercrine gamma family. In terms of tissue distribution, expressed in activated CD8(+) T cells. In the thymus, expressed by medullary thymic epithelial cells.

Its subcellular location is the secreted. In terms of biological role, chemotactic activity for lymphocytes but not for monocytes or neutrophils. In thymus, mediates medullary accumulation of thymic dendritic cells and contributes to regulatoy T cell development, playing a role in self-tolerance establishment. In Mus musculus (Mouse), this protein is Lymphotactin (Xcl1).